Here is a 1122-residue protein sequence, read N- to C-terminus: AP-4 complex subunit epsilon-1 (1122 aa).

Ser699 bears the Phosphoserine mark. 2 stretches are compositionally biased toward basic and acidic residues: residues 714–728 and 745–760; these read YLPK…KPEA and TTRK…STEE. 2 disordered regions span residues 714-760 and 797-861; these read YLPK…STEE and SKLK…AEKL. The interval 726-1122 is interaction with TEPSIN; the sequence is PEASHVPAEG…CHCQKVMQTS (397 aa). Low complexity predominate over residues 841 to 853; that stretch reads ELSSELFRSESLS. A Phosphoserine modification is found at Ser851.

This sequence belongs to the adaptor complexes large subunit family. As to quaternary structure, adaptor protein complex 4 (AP-4) is a heterotetramer composed of two large adaptins (epsilon-type subunit AP4E1 and beta-type subunit AP4B1), a medium adaptin (mu-type subunit AP4M1) and a small adaptin (sigma-type AP4S1). Interacts with TEPSIN. Interacts with GRIA2; probably indirect it mediates the somatodendritic localization of GRIA2 in neurons.

The protein localises to the golgi apparatus. It localises to the trans-Golgi network membrane. Its function is as follows. Component of the adaptor protein complex 4 (AP-4). Adaptor protein complexes are vesicle coat components involved both in vesicle formation and cargo selection. They control the vesicular transport of proteins in different trafficking pathways. AP-4 forms a non clathrin-associated coat on vesicles departing the trans-Golgi network (TGN) and may be involved in the targeting of proteins from the trans-Golgi network (TGN) to the endosomal-lysosomal system. It is also involved in protein sorting to the basolateral membrane in epithelial cells and the proper asymmetric localization of somatodendritic proteins in neurons. AP-4 is involved in the recognition and binding of tyrosine-based sorting signals found in the cytoplasmic part of cargos, but may also recognize other types of sorting signal. The chain is AP-4 complex subunit epsilon-1 from Mus musculus (Mouse).